The sequence spans 599 residues: ATP-dependent zinc metalloprotease FtsH 3 (599 aa).

The Cytoplasmic segment spans residues 1–7 (MKYKKKN). The helical transmembrane segment at 8–28 (ILFITTIIVIYLAFLFNWLEI) threads the bilayer. Residues 29-128 (GIFKPKGESI…PFSWLLSIFS (100 aa)) lie on the Extracellular side of the membrane. Residues 129–149 (ILLNFINVLSSLVFTIYIFLA) form a helical membrane-spanning segment. Residues 150–599 (IHRESGKLNS…IEQLVVNTKK (450 aa)) are Cytoplasmic-facing. 214–221 (GPPGTGKT) serves as a coordination point for ATP. His-436 provides a ligand contact to Zn(2+). Glu-437 is a catalytic residue. Residues His-440 and Asp-512 each contribute to the Zn(2+) site.

It in the central section; belongs to the AAA ATPase family. This sequence in the C-terminal section; belongs to the peptidase M41 family. As to quaternary structure, homohexamer. Zn(2+) is required as a cofactor.

It is found in the cell membrane. Functionally, acts as a processive, ATP-dependent zinc metallopeptidase for both cytoplasmic and membrane proteins. Plays a role in the quality control of integral membrane proteins. The polypeptide is ATP-dependent zinc metalloprotease FtsH 3 (Phytoplasma mali (strain AT)).